A 341-amino-acid polypeptide reads, in one-letter code: UPF0283 membrane protein VV2076 (341 aa).

Transmembrane regions (helical) follow at residues 64–84, 93–113, 207–227, and 255–275; these read LAGG…VDSV, WLTL…LGAM, ESAA…LVAW, and LVLA…AGMD.

Belongs to the UPF0283 family.

It localises to the cell inner membrane. This is UPF0283 membrane protein VV2076 from Vibrio vulnificus (strain YJ016).